We begin with the raw amino-acid sequence, 1316 residues long: Tetratricopeptide repeat protein 21B (1316 aa).

TPR repeat units lie at residues 108-141 (EKAL…SDGS), 145-178 (HVLK…GNDT), 180-211 (ALLG…FPSF), 285-323 (AQLF…NPQQ), 324-357 (SEFA…DETS), 492-525 (LQTV…NPSY), 563-596 (PLYH…PGMK), 617-650 (LSIF…FSGT), 722-755 (PRSF…NPKD), 757-789 (TLAS…GQKN), 791-822 (LCYD…EPVN), 831-864 (GRCQ…QARV), 884-917 (AEIC…CETD), 919-951 (KIML…DQDN), 952-985 (EAAT…KPDN), 1023-1056 (PGFQ…RDWG), 1197-1230 (EKSW…NRSC), 1232-1264 (KAYE…SNRT), and 1266-1299 (PAVG…HPTY).

It belongs to the TTC21 family. In terms of assembly, component of the IFT complex A (IFT-A) complex. IFT-A complex is divided into a core subcomplex composed of IFT122:IFT140:WDR19 which is associated with TULP3 and a peripheral subcomplex composed of IFT43:WDR35:TTC21B. Interacts directy with WDR35 and TTC21B. Interacts with TTC25.

Its subcellular location is the cytoplasm. The protein localises to the cytoskeleton. The protein resides in the cilium axoneme. Its function is as follows. Component of the IFT complex A (IFT-A), a complex required for retrograde ciliary transport and entry into cilia of G protein-coupled receptors (GPCRs). Essential for retrograde trafficking of IFT-1, IFT-B and GPCRs. Negatively modulates the SHH signal transduction. This Homo sapiens (Human) protein is Tetratricopeptide repeat protein 21B.